Consider the following 867-residue polypeptide: Prominin-1 (867 aa).

The signal sequence occupies residues 1–19 (MALVFSALLLLGLCGKISS). Residues 20–107 (EGQPAFHNTP…VLALKIALYE (88 aa)) are Extracellular-facing. The chain crosses the membrane as a helical span at residues 108–128 (IGVLICAILGLLFIILMPLVG). Topologically, residues 129–158 (CFFCMCRCCNKCGGEMHQRQKQNAPCRRKC) are cytoplasmic. Residues 159–179 (LGLSLLVICLLMSLGIIYGFV) form a helical membrane-spanning segment. The Extracellular portion of the chain corresponds to 180–434 (ANQQTRTRIK…LPKLEEYDSY (255 aa)). N6-acetyllysine occurs at positions 226, 258, and 265. N-linked (GlcNAc...) asparagine glycans are attached at residues Asn273, Asn291, Asn332, Asn374, and Asn415. The chain crosses the membrane as a helical span at residues 435-455 (WWLGGLIVCFLLTLIVTFFFL). Residues 456-487 (GLLCGVFGYDKHATPTRRGCVSNTGGIFLMAG) lie on the Cytoplasmic side of the membrane. A helical transmembrane segment spans residues 488 to 508 (VGFGFLFCWILMILVVLTFVV). Topologically, residues 509–794 (GANVEKLLCE…LCGYVADPLN (286 aa)) are extracellular. N-linked (GlcNAc...) asparagine glycans are attached at residues Asn554, Asn581, and Asn732. A helical transmembrane segment spans residues 795–815 (LFWFGIGKATVLLLPAVIIAI). Residues 816–867 (KLAKYYRRMDSEDVYDDVETVPMKNLEIGSNGYHKDHLYGVHNPVMTSPSRY) are Cytoplasmic-facing. Ser865 carries the post-translational modification Phosphoserine.

This sequence belongs to the prominin family. In terms of assembly, interacts with CDHR1 and with actin filaments. Interacts with NAT8 and NAT8B. In terms of processing, acetylation at Lys-226, Lys-258 and Lys-265 by NAT8 and NAT8B may control PROM1 protein expression and its function in cell apoptosis. As to expression, in the submandibular gland, expressed on the apical side of epithelial cells. In the parotid gland, expressed in the intercalated ducts. In the sublingual gland, expressed in intercalated ducts. In the extraorbital lacrimal gland, expressed in the intercalated tubules and larger intralobular ducts. Expressed in the retina. Present in urine within small membrane particles (at protein level). In the embryo, expressed on the apical side of neuroepithelial cells and of other epithelia such as lung buds, gut and ureter buds. In the adult, expressed at the apical side of the kidney tubules and of the ependymal layer of the brain. Not expressed in gut, liver, lung, pituitary, adrenal, heart or spleen. Localized to the nascent disk membranes at the base of the rod outer segment in the retina (at protein level).

Its subcellular location is the apical cell membrane. It is found in the cell projection. The protein localises to the microvillus membrane. The protein resides in the cilium. It localises to the photoreceptor outer segment. Its subcellular location is the endoplasmic reticulum. It is found in the endoplasmic reticulum-Golgi intermediate compartment. Its function is as follows. May play a role in cell differentiation, proliferation and apoptosis. Binds cholesterol in cholesterol-containing plasma membrane microdomains and may play a role in the organization of the apical plasma membrane in epithelial cells. During early retinal development acts as a key regulator of disk morphogenesis. Involved in regulation of MAPK and Akt signaling pathways. In neuroblastoma cells suppresses cell differentiation such as neurite outgrowth in a RET-dependent manner. This chain is Prominin-1 (Prom1), found in Mus musculus (Mouse).